The primary structure comprises 342 residues: N-acetyl-gamma-glutamyl-phosphate reductase (342 aa).

The active site involves cysteine 146.

This sequence belongs to the NAGSA dehydrogenase family. Type 1 subfamily.

The protein resides in the cytoplasm. It catalyses the reaction N-acetyl-L-glutamate 5-semialdehyde + phosphate + NADP(+) = N-acetyl-L-glutamyl 5-phosphate + NADPH + H(+). It functions in the pathway amino-acid biosynthesis; L-arginine biosynthesis; N(2)-acetyl-L-ornithine from L-glutamate: step 3/4. Its function is as follows. Catalyzes the NADPH-dependent reduction of N-acetyl-5-glutamyl phosphate to yield N-acetyl-L-glutamate 5-semialdehyde. This Saccharopolyspora erythraea (strain ATCC 11635 / DSM 40517 / JCM 4748 / NBRC 13426 / NCIMB 8594 / NRRL 2338) protein is N-acetyl-gamma-glutamyl-phosphate reductase.